Reading from the N-terminus, the 196-residue chain is Large ribosomal subunit protein uL5 (196 aa).

The protein belongs to the universal ribosomal protein uL5 family. As to quaternary structure, part of the 50S ribosomal subunit; part of the 5S rRNA/L5/L18/L25 subcomplex. Contacts the 5S rRNA and the P site tRNA. Forms a bridge to the 30S subunit in the 70S ribosome.

Functionally, this is one of the proteins that bind and probably mediate the attachment of the 5S RNA into the large ribosomal subunit, where it forms part of the central protuberance. In the 70S ribosome it contacts protein S13 of the 30S subunit (bridge B1b), connecting the 2 subunits; this bridge is implicated in subunit movement. Contacts the P site tRNA; the 5S rRNA and some of its associated proteins might help stabilize positioning of ribosome-bound tRNAs. The polypeptide is Large ribosomal subunit protein uL5 (Chlorobium phaeobacteroides (strain BS1)).